A 519-amino-acid chain; its full sequence is Laccase-2 (519 aa).

A signal peptide spans 1–20 (MGLQRFSFFVTLALVARSLA). Plastocyanin-like domains lie at 22-147 (IGPV…FVVY) and 159-301 (VDNE…ILRY). The N-linked (GlcNAc...) asparagine glycan is linked to Asn74. Cu cation is bound by residues His84, His86, His129, and His131. Intrachain disulfides connect Cys105-Cys508 and Cys137-Cys225. N-linked (GlcNAc...) asparagine glycans are attached at residues Asn161, Asn228, Asn237, Asn271, Asn353, and Asn361. A Plastocyanin-like 3 domain is found at 368 to 490 (TVPVLLQILS…AGFAIVFAED (123 aa)). 3 residues coordinate Cu cation: His415, His418, and His420. The N-linked (GlcNAc...) asparagine glycan is linked to Asn456. The Cu cation site is built by His472, Cys473, His474, and His478.

This sequence belongs to the multicopper oxidase family. The cofactor is Cu cation.

It is found in the secreted. The enzyme catalyses 4 hydroquinone + O2 = 4 benzosemiquinone + 2 H2O. Lignin degradation and detoxification of lignin-derived products. This chain is Laccase-2 (LCC2), found in Trametes versicolor (White-rot fungus).